The chain runs to 250 residues: UDP-2,3-diacylglucosamine hydrolase (250 aa).

The Mn(2+) site is built by D8, H10, D41, N79, and H115. 79 to 80 contacts substrate; the sequence is NH. Residues D123, T165, K168, and H196 each contribute to the substrate site. Residues H196 and H198 each coordinate Mn(2+).

This sequence belongs to the LpxH family. Mn(2+) serves as cofactor.

The protein localises to the cell inner membrane. It catalyses the reaction UDP-2-N,3-O-bis[(3R)-3-hydroxytetradecanoyl]-alpha-D-glucosamine + H2O = 2-N,3-O-bis[(3R)-3-hydroxytetradecanoyl]-alpha-D-glucosaminyl 1-phosphate + UMP + 2 H(+). Its pathway is glycolipid biosynthesis; lipid IV(A) biosynthesis; lipid IV(A) from (3R)-3-hydroxytetradecanoyl-[acyl-carrier-protein] and UDP-N-acetyl-alpha-D-glucosamine: step 4/6. Hydrolyzes the pyrophosphate bond of UDP-2,3-diacylglucosamine to yield 2,3-diacylglucosamine 1-phosphate (lipid X) and UMP by catalyzing the attack of water at the alpha-P atom. Involved in the biosynthesis of lipid A, a phosphorylated glycolipid that anchors the lipopolysaccharide to the outer membrane of the cell. The polypeptide is UDP-2,3-diacylglucosamine hydrolase (Blochmanniella pennsylvanica (strain BPEN)).